Consider the following 619-residue polypeptide: E3 ubiquitin-protein ligase DTX4 (619 aa).

2 consecutive WWE domains span residues 1-78 and 79-155; these read MLLA…PVRR and NYYD…RVRR. Disordered stretches follow at residues 238-281 and 358-389; these read KPLD…PGPN and PPPV…KGKT. Residues 261–273 show a composition bias toward polar residues; that stretch reads QASSMPTGTTMGS. Over residues 378–387 the composition is skewed to basic residues; it reads KTTKKQAKKG. An RING-type; atypical zinc finger spans residues 409-468; the sequence is CTICMERLTAPSGYKGPQPTVKPDLVGKLSRCGHVYHIYCLVAMYNNGNKDGSLQCPTCK.

Belongs to the Deltex family. Interacts with NLRP4.

The protein localises to the cytoplasm. It carries out the reaction S-ubiquitinyl-[E2 ubiquitin-conjugating enzyme]-L-cysteine + [acceptor protein]-L-lysine = [E2 ubiquitin-conjugating enzyme]-L-cysteine + N(6)-ubiquitinyl-[acceptor protein]-L-lysine.. It functions in the pathway protein modification; protein ubiquitination. Functionally, regulator of Notch signaling, a signaling pathway involved in cell-cell communications that regulates a broad spectrum of cell-fate determinations. Functions as a ubiquitin ligase protein in vivo, mediating 'Lys48'-linked polyubiquitination and promoting degradation of TBK1, targeting to TBK1 requires interaction with NLRP4. The sequence is that of E3 ubiquitin-protein ligase DTX4 (DTX4) from Homo sapiens (Human).